Here is a 351-residue protein sequence, read N- to C-terminus: Uroporphyrinogen decarboxylase (351 aa).

Substrate-binding positions include 25–29, Asp74, Tyr151, Ser206, and His325; that span reads RQAGR.

It belongs to the uroporphyrinogen decarboxylase family. Homodimer.

The protein localises to the cytoplasm. The enzyme catalyses uroporphyrinogen III + 4 H(+) = coproporphyrinogen III + 4 CO2. Its pathway is porphyrin-containing compound metabolism; protoporphyrin-IX biosynthesis; coproporphyrinogen-III from 5-aminolevulinate: step 4/4. In terms of biological role, catalyzes the decarboxylation of four acetate groups of uroporphyrinogen-III to yield coproporphyrinogen-III. The polypeptide is Uroporphyrinogen decarboxylase (Chlorobaculum parvum (strain DSM 263 / NCIMB 8327) (Chlorobium vibrioforme subsp. thiosulfatophilum)).